A 435-amino-acid polypeptide reads, in one-letter code: uncharacterized protein (435 aa).

Transmembrane regions (helical) follow at residues 14 to 34, 44 to 64, 84 to 104, 123 to 143, 153 to 173, 187 to 207, 224 to 244, 267 to 287, 324 to 344, 346 to 366, 375 to 395, and 400 to 420; these read VSMA…GVGA, TFIL…KLGA, IITG…IALF, FNIA…NFFG, FIVL…LITI, VSGM…FGVI, AIFI…ISAI, FLGN…ISSA, LYIT…EGVA, ITSA…YILI, IVIF…YYQW, and FVFY…IIYR.

It is found in the cell membrane. This is an uncharacterized protein from Methanocaldococcus jannaschii (strain ATCC 43067 / DSM 2661 / JAL-1 / JCM 10045 / NBRC 100440) (Methanococcus jannaschii).